A 239-amino-acid chain; its full sequence is MAGHSKWANIQHRKGRQDEKRGKIWTRIIREITVAARTGGGDPSANPRLRLAIDKAKAANMPADRIKYNIDKASGTLEGVSYEEIRYEGYGIGGAAIIVDTMTDNRVRTVAEVRHAFSKYGGNMGTEGSVAFQFKNVGQIIFAPGTSEDKVMEVALEAGAEDVITDDEGAIEVLTAPGDFEAVRDALGAAGLQPEVAEVTMRPENTIALEGDDVARMQKLLDMIEDLDDVQEVYHNAEL.

The disordered stretch occupies residues 1-21 (MAGHSKWANIQHRKGRQDEKR).

This sequence belongs to the TACO1 family.

The protein localises to the cytoplasm. The chain is Probable transcriptional regulatory protein Ajs_1898 from Acidovorax sp. (strain JS42).